The following is a 355-amino-acid chain: UDP-N-acetylglucosamine--N-acetylmuramyl-(pentapeptide) pyrophosphoryl-undecaprenol N-acetylglucosamine transferase (355 aa).

UDP-N-acetyl-alpha-D-glucosamine contacts are provided by residues 15-17 (TGG), Asn-127, Arg-163, Ser-191, Ile-244, 263-268 (ALTVSE), and Gln-288.

This sequence belongs to the glycosyltransferase 28 family. MurG subfamily.

The protein localises to the cell inner membrane. The catalysed reaction is di-trans,octa-cis-undecaprenyl diphospho-N-acetyl-alpha-D-muramoyl-L-alanyl-D-glutamyl-meso-2,6-diaminopimeloyl-D-alanyl-D-alanine + UDP-N-acetyl-alpha-D-glucosamine = di-trans,octa-cis-undecaprenyl diphospho-[N-acetyl-alpha-D-glucosaminyl-(1-&gt;4)]-N-acetyl-alpha-D-muramoyl-L-alanyl-D-glutamyl-meso-2,6-diaminopimeloyl-D-alanyl-D-alanine + UDP + H(+). It functions in the pathway cell wall biogenesis; peptidoglycan biosynthesis. Its function is as follows. Cell wall formation. Catalyzes the transfer of a GlcNAc subunit on undecaprenyl-pyrophosphoryl-MurNAc-pentapeptide (lipid intermediate I) to form undecaprenyl-pyrophosphoryl-MurNAc-(pentapeptide)GlcNAc (lipid intermediate II). The protein is UDP-N-acetylglucosamine--N-acetylmuramyl-(pentapeptide) pyrophosphoryl-undecaprenol N-acetylglucosamine transferase of Salmonella typhi.